The sequence spans 573 residues: Phosphoenolpyruvate-protein phosphotransferase (573 aa).

The Tele-phosphohistidine intermediate role is filled by histidine 190. Substrate is bound by residues arginine 297 and arginine 333. The Mg(2+) site is built by glutamate 432 and aspartate 456. A phosphoenolpyruvate-binding site is contributed by 455–456 (ND). Arginine 466 lines the substrate pocket. Cysteine 503 (proton donor) is an active-site residue.

Belongs to the PEP-utilizing enzyme family. Homodimer. The cofactor is Mg(2+).

The protein resides in the cytoplasm. The enzyme catalyses L-histidyl-[protein] + phosphoenolpyruvate = N(pros)-phospho-L-histidyl-[protein] + pyruvate. Its function is as follows. General (non sugar-specific) component of the phosphoenolpyruvate-dependent sugar phosphotransferase system (sugar PTS). This major carbohydrate active-transport system catalyzes the phosphorylation of incoming sugar substrates concomitantly with their translocation across the cell membrane. Enzyme I transfers the phosphoryl group from phosphoenolpyruvate (PEP) to the phosphoryl carrier protein (HPr). This Staphylococcus carnosus (strain TM300) protein is Phosphoenolpyruvate-protein phosphotransferase (ptsI).